A 140-amino-acid chain; its full sequence is MNLEALCKEAELSFYDDELVSENGRKIYRIYVQKEGGVNLDDCARLSEILSPIFDVEPPVNGEYFLEVSSPGLERKLSKIEHFAKSIGELVKITTNEKEKFEAKIIAVDDENITLENLENKEKTTINFNDIKKARTFIIW.

The protein belongs to the RimP family.

It localises to the cytoplasm. Its function is as follows. Required for maturation of 30S ribosomal subunits. This chain is Ribosome maturation factor RimP, found in Campylobacter jejuni subsp. jejuni serotype O:23/36 (strain 81-176).